The primary structure comprises 451 residues: Phosphoglucosamine mutase (451 aa).

Residue serine 102 is the Phosphoserine intermediate of the active site. Positions 102, 242, 244, and 246 each coordinate Mg(2+). At serine 102 the chain carries Phosphoserine.

The protein belongs to the phosphohexose mutase family. The cofactor is Mg(2+). In terms of processing, activated by phosphorylation.

It carries out the reaction alpha-D-glucosamine 1-phosphate = D-glucosamine 6-phosphate. In terms of biological role, catalyzes the conversion of glucosamine-6-phosphate to glucosamine-1-phosphate. The chain is Phosphoglucosamine mutase from Staphylococcus aureus (strain bovine RF122 / ET3-1).